A 310-amino-acid polypeptide reads, in one-letter code: Putative HTH-type transcriptional regulatory protein SSO0942 (310 aa).

Residues 125–180 (LKHKREEMGYSIGDVAKFLGVSRKAIYDYEKGDSDVSLEVAEKLIDLFGDDIIGDV) form the HTH cro/C1-type domain. The H-T-H motif DNA-binding region spans 136–155 (IGDVAKFLGVSRKAIYDYEK).

In Saccharolobus solfataricus (strain ATCC 35092 / DSM 1617 / JCM 11322 / P2) (Sulfolobus solfataricus), this protein is Putative HTH-type transcriptional regulatory protein SSO0942.